Consider the following 439-residue polypeptide: Cysteine--tRNA ligase (439 aa).

Cys26 contacts Zn(2+). The 'HIGH' region signature appears at 28–38 (PTVYNHVHIGN). Cys206, His231, and Glu235 together coordinate Zn(2+). The 'KMSKS' region motif lies at 263–267 (KMSKS). Lys266 contributes to the ATP binding site.

Belongs to the class-I aminoacyl-tRNA synthetase family. As to quaternary structure, monomer. The cofactor is Zn(2+).

The protein resides in the cytoplasm. It catalyses the reaction tRNA(Cys) + L-cysteine + ATP = L-cysteinyl-tRNA(Cys) + AMP + diphosphate. This Malacoplasma penetrans (strain HF-2) (Mycoplasma penetrans) protein is Cysteine--tRNA ligase.